Consider the following 89-residue polypeptide: Small ribosomal subunit protein uS15 (89 aa).

Positions 1-10 (MSLDTTEKQE) are enriched in basic and acidic residues. Residues 1 to 23 (MSLDTTEKQELINAHQTHATDTG) are disordered. A compositionally biased stretch (polar residues) spans 14–23 (AHQTHATDTG).

Belongs to the universal ribosomal protein uS15 family. In terms of assembly, part of the 30S ribosomal subunit. Forms a bridge to the 50S subunit in the 70S ribosome, contacting the 23S rRNA.

One of the primary rRNA binding proteins, it binds directly to 16S rRNA where it helps nucleate assembly of the platform of the 30S subunit by binding and bridging several RNA helices of the 16S rRNA. In terms of biological role, forms an intersubunit bridge (bridge B4) with the 23S rRNA of the 50S subunit in the ribosome. The protein is Small ribosomal subunit protein uS15 of Synechococcus sp. (strain WH7803).